A 569-amino-acid polypeptide reads, in one-letter code: Protein GPR108 (569 aa).

Positions 1 to 34 are cleaved as a signal peptide; that stretch reads MAVSERRGLSGESPTQCRWGYLSLLVLTLSGCSG. N-linked (GlcNAc...) asparagine glycans are attached at residues N59, N111, and N182. The disordered stretch occupies residues 144–219; it reads LLPEAPTQSG…DPSGKEKDQV (76 aa). Polar residues predominate over residues 180–192; sequence KENQTAPQVSGDK. A compositionally biased stretch (basic and acidic residues) spans 194 to 203; it reads TPGEHRHSSE. 2 N-linked (GlcNAc...) asparagine glycosylation sites follow: N226 and N230. 7 helical membrane passes run 289–309, 318–338, 362–382, 393–413, 427–447, 475–495, and 499–519; these read LYLI…SVLC, IHWL…FHSI, LLKG…WAFV, IFGI…VIES, ILFL…VWSI, VMVI…QVAV, and WQWL…VLTG.

The protein belongs to the LU7TM family. As to expression, high expression in spleen, lung, stomach, large and small intestine, and thymus.

The protein resides in the golgi apparatus. It localises to the cis-Golgi network membrane. It is found in the trans-Golgi network membrane. The protein localises to the golgi apparatus membrane. May play a role in intracellular immune modulation by activating NF-kappaB response and attenuating Toll-like-receptor response. In terms of biological role, (Microbial infection) Plays an essential function in adeno-associated virus (AAV) transduction, across multiple serotypes except AAV5. May play a critical role in mediating the endosomal virus escape or in the AAV virions trafficking from endosomes to the nucleus. This Mus musculus (Mouse) protein is Protein GPR108 (Gpr108).